A 188-amino-acid polypeptide reads, in one-letter code: GTP cyclohydrolase 1 (188 aa).

3 residues coordinate Zn(2+): C73, H76, and C144.

It belongs to the GTP cyclohydrolase I family. In terms of assembly, homomer.

The enzyme catalyses GTP + H2O = 7,8-dihydroneopterin 3'-triphosphate + formate + H(+). The protein operates within cofactor biosynthesis; 7,8-dihydroneopterin triphosphate biosynthesis; 7,8-dihydroneopterin triphosphate from GTP: step 1/1. This is GTP cyclohydrolase 1 from Caldivirga maquilingensis (strain ATCC 700844 / DSM 13496 / JCM 10307 / IC-167).